The sequence spans 1242 residues: Receptor-type adenylate cyclase GRESAG 4.1 (1242 aa).

The Cytoplasmic segment spans residues 1–39 (MHWQEGGGRGCVYTHGNCRRNLTARALQALQHVEALTCH). The helical transmembrane segment at 40–60 (YCVSLLHLLPLLLMWMPPVCA) threads the bilayer. Over 61–862 (DDSAVTVNVL…THTVTDSWNN (802 aa)) the chain is Extracellular. N-linked (GlcNAc...) asparagine glycosylation is found at N116, N289, N318, N338, N401, N534, N563, N603, N702, N741, and N818. The helical transmembrane segment at 863 to 883 (FWVCIRLVIIYCPWCVPTHLP) threads the bilayer. At 884 to 1242 (AERRNNNRAP…PFYDMHLQEY (359 aa)) the chain is on the cytoplasmic side. A Guanylate cyclase domain is found at 901-1056 (TLIFTDIESS…RTPNMAARTE (156 aa)). Mg(2+) is bound by residues D906 and D949.

Belongs to the adenylyl cyclase class-3 family. Requires Mg(2+) as cofactor.

It is found in the membrane. The catalysed reaction is ATP = 3',5'-cyclic AMP + diphosphate. Functionally, could act as a receptor for an unknown ligand. This Trypanosoma brucei brucei protein is Receptor-type adenylate cyclase GRESAG 4.1 (GRESAG 4.1).